We begin with the raw amino-acid sequence, 177 residues long: ATP synthase subunit delta (177 aa).

The protein belongs to the ATPase delta chain family. In terms of assembly, F-type ATPases have 2 components, F(1) - the catalytic core - and F(0) - the membrane proton channel. F(1) has five subunits: alpha(3), beta(3), gamma(1), delta(1), epsilon(1). F(0) has three main subunits: a(1), b(2) and c(10-14). The alpha and beta chains form an alternating ring which encloses part of the gamma chain. F(1) is attached to F(0) by a central stalk formed by the gamma and epsilon chains, while a peripheral stalk is formed by the delta and b chains.

It is found in the cell inner membrane. F(1)F(0) ATP synthase produces ATP from ADP in the presence of a proton or sodium gradient. F-type ATPases consist of two structural domains, F(1) containing the extramembraneous catalytic core and F(0) containing the membrane proton channel, linked together by a central stalk and a peripheral stalk. During catalysis, ATP synthesis in the catalytic domain of F(1) is coupled via a rotary mechanism of the central stalk subunits to proton translocation. In terms of biological role, this protein is part of the stalk that links CF(0) to CF(1). It either transmits conformational changes from CF(0) to CF(1) or is implicated in proton conduction. The polypeptide is ATP synthase subunit delta (Colwellia psychrerythraea (strain 34H / ATCC BAA-681) (Vibrio psychroerythus)).